The sequence spans 117 residues: uncharacterized protein (117 aa).

This is an uncharacterized protein from Microplitis demolitor bracovirus (isolate Webb) (MdBV).